The primary structure comprises 60 residues: Putative transmembrane protein 74 (60 aa).

The next 2 membrane-spanning stretches (helical) occupy residues 4 to 24 (FSVIMYLINSVIFTFMIFLTF) and 35 to 55 (WVYILIGFFTAIVFHSGYQAG).

It localises to the host membrane. The sequence is that of Putative transmembrane protein 74 (SIFV0074) from Sulfolobus islandicus filamentous virus (isolate Iceland/Hveragerdi) (SIFV).